Here is a 461-residue protein sequence, read N- to C-terminus: Argininosuccinate lyase (461 aa).

It belongs to the lyase 1 family. Argininosuccinate lyase subfamily.

Its subcellular location is the cytoplasm. It carries out the reaction 2-(N(omega)-L-arginino)succinate = fumarate + L-arginine. It participates in amino-acid biosynthesis; L-arginine biosynthesis; L-arginine from L-ornithine and carbamoyl phosphate: step 3/3. The chain is Argininosuccinate lyase from Nitrosomonas europaea (strain ATCC 19718 / CIP 103999 / KCTC 2705 / NBRC 14298).